A 212-amino-acid polypeptide reads, in one-letter code: MAVGILGTKLGMTQIFDQETGMAIPVTVVQAGPCTVTQVKTPDTDGYTAIQVGYHEVKEKALTKAEIGHLKKIDAPPLRHLKEYRLDDSSQYQLGDAIKADIFNPGDLVDVSGKSMGRGFAGYQKRHNFKRGNMTHGSKNHRLPGSTGAGTTPGRVYPGKRMAGQYGATQVTIRHLTVVRVDSDRNLILVKGAIPGKPGTLLNITPAKTVGK.

The interval 130–155 (KRGNMTHGSKNHRLPGSTGAGTTPGR) is disordered.

The protein belongs to the universal ribosomal protein uL3 family. Part of the 50S ribosomal subunit. Forms a cluster with proteins L14 and L19.

One of the primary rRNA binding proteins, it binds directly near the 3'-end of the 23S rRNA, where it nucleates assembly of the 50S subunit. The polypeptide is Large ribosomal subunit protein uL3 (Rippkaea orientalis (strain PCC 8801 / RF-1) (Cyanothece sp. (strain PCC 8801))).